The following is a 218-amino-acid chain: ATP-dependent Clp protease proteolytic subunit 2 (218 aa).

The protein belongs to the peptidase S14 family. Fourteen ClpP subunits assemble into 2 heptameric rings which stack back to back to give a disk-like structure with a central cavity, resembling the structure of eukaryotic proteasomes.

The protein resides in the cytoplasm. It catalyses the reaction Hydrolysis of proteins to small peptides in the presence of ATP and magnesium. alpha-casein is the usual test substrate. In the absence of ATP, only oligopeptides shorter than five residues are hydrolyzed (such as succinyl-Leu-Tyr-|-NHMec, and Leu-Tyr-Leu-|-Tyr-Trp, in which cleavage of the -Tyr-|-Leu- and -Tyr-|-Trp bonds also occurs).. Functionally, cleaves peptides in various proteins in a process that requires ATP hydrolysis. Has a chymotrypsin-like activity. Plays a major role in the degradation of misfolded proteins. The chain is ATP-dependent Clp protease proteolytic subunit 2 from Gloeobacter violaceus (strain ATCC 29082 / PCC 7421).